The following is a 434-amino-acid chain: Cullin-like protein 5 (434 aa).

The tract at residues 1–34 (MKRSISPDPFSSTKSPKLVHHSPDDGGAEGNPYR) is disordered.

It belongs to the cullin family.

The sequence is that of Cullin-like protein 5 from Arabidopsis thaliana (Mouse-ear cress).